Reading from the N-terminus, the 203-residue chain is V-type ATP synthase subunit D (203 aa).

Belongs to the V-ATPase D subunit family.

Its function is as follows. Produces ATP from ADP in the presence of a proton gradient across the membrane. The chain is V-type ATP synthase subunit D from Streptococcus pneumoniae (strain Hungary19A-6).